Here is a 337-residue protein sequence, read N- to C-terminus: Tetraacyldisaccharide 4'-kinase (337 aa).

55-62 serves as a coordination point for ATP; that stretch reads TAGGNGKT.

Belongs to the LpxK family.

It carries out the reaction a lipid A disaccharide + ATP = a lipid IVA + ADP + H(+). Its pathway is glycolipid biosynthesis; lipid IV(A) biosynthesis; lipid IV(A) from (3R)-3-hydroxytetradecanoyl-[acyl-carrier-protein] and UDP-N-acetyl-alpha-D-glucosamine: step 6/6. Its function is as follows. Transfers the gamma-phosphate of ATP to the 4'-position of a tetraacyldisaccharide 1-phosphate intermediate (termed DS-1-P) to form tetraacyldisaccharide 1,4'-bis-phosphate (lipid IVA). This chain is Tetraacyldisaccharide 4'-kinase, found in Sodalis glossinidius (strain morsitans).